The sequence spans 586 residues: Clathrin heavy chain linker domain-containing protein 1 (586 aa).

The stretch at 174 to 232 (MNLDALTKYMKHLEDKYAEIKQAMLIKYVPAQRKADLDEEMIVLLKRRDVAENLNKKLQ) forms a coiled coil.

The protein is Clathrin heavy chain linker domain-containing protein 1 (CLHC1) of Homo sapiens (Human).